Consider the following 114-residue polypeptide: Small ribosomal subunit protein bS6 (114 aa).

It belongs to the bacterial ribosomal protein bS6 family.

Its function is as follows. Binds together with bS18 to 16S ribosomal RNA. In Thermosynechococcus vestitus (strain NIES-2133 / IAM M-273 / BP-1), this protein is Small ribosomal subunit protein bS6.